The primary structure comprises 209 residues: Ion-translocating oxidoreductase complex subunit G (209 aa).

The chain crosses the membrane as a helical span at residues glycine 9–leucine 29. An FMN phosphoryl threonine modification is found at threonine 175.

This sequence belongs to the RnfG family. As to quaternary structure, the complex is composed of six subunits: RnfA, RnfB, RnfC, RnfD, RnfE and RnfG. FMN is required as a cofactor.

Its subcellular location is the cell inner membrane. Functionally, part of a membrane-bound complex that couples electron transfer with translocation of ions across the membrane. This is Ion-translocating oxidoreductase complex subunit G from Photorhabdus laumondii subsp. laumondii (strain DSM 15139 / CIP 105565 / TT01) (Photorhabdus luminescens subsp. laumondii).